Here is a 230-residue protein sequence, read N- to C-terminus: Putative N-acetylmannosamine-6-phosphate 2-epimerase (230 aa).

Belongs to the NanE family.

It catalyses the reaction an N-acyl-D-glucosamine 6-phosphate = an N-acyl-D-mannosamine 6-phosphate. The protein operates within amino-sugar metabolism; N-acetylneuraminate degradation; D-fructose 6-phosphate from N-acetylneuraminate: step 3/5. Its function is as follows. Converts N-acetylmannosamine-6-phosphate (ManNAc-6-P) to N-acetylglucosamine-6-phosphate (GlcNAc-6-P). The chain is Putative N-acetylmannosamine-6-phosphate 2-epimerase from Malacoplasma penetrans (strain HF-2) (Mycoplasma penetrans).